Consider the following 29-residue polypeptide: Galanin (29 aa).

Ala29 is modified (alanine amide).

It belongs to the galanin family.

It localises to the secreted. Its function is as follows. Contracts smooth muscle of the gastrointestinal and genitourinary tract, regulates growth hormone release, modulates insulin release, and may be involved in the control of adrenal secretion. In Pelophylax ridibundus (Marsh frog), this protein is Galanin (gal).